The sequence spans 110 residues: UPF0122 protein SP70585_1353 (110 aa).

This sequence belongs to the UPF0122 family.

Might take part in the signal recognition particle (SRP) pathway. This is inferred from the conservation of its genetic proximity to ftsY/ffh. May be a regulatory protein. The protein is UPF0122 protein SP70585_1353 of Streptococcus pneumoniae (strain 70585).